We begin with the raw amino-acid sequence, 398 residues long: Succinate--CoA ligase [ADP-forming] subunit beta (398 aa).

The region spanning 9–254 (KRLLHTYGAP…LSEEDEKEIE (246 aa)) is the ATP-grasp domain. Residues Lys46, 53-55 (GRG), Glu109, Ala112, and Glu117 contribute to the ATP site. Asn209 and Asp223 together coordinate Mg(2+). Substrate is bound by residues Asn274 and 331 to 333 (GIM).

Belongs to the succinate/malate CoA ligase beta subunit family. As to quaternary structure, heterotetramer of two alpha and two beta subunits. Requires Mg(2+) as cofactor.

The catalysed reaction is succinate + ATP + CoA = succinyl-CoA + ADP + phosphate. The enzyme catalyses GTP + succinate + CoA = succinyl-CoA + GDP + phosphate. The protein operates within carbohydrate metabolism; tricarboxylic acid cycle; succinate from succinyl-CoA (ligase route): step 1/1. In terms of biological role, succinyl-CoA synthetase functions in the citric acid cycle (TCA), coupling the hydrolysis of succinyl-CoA to the synthesis of either ATP or GTP and thus represents the only step of substrate-level phosphorylation in the TCA. The beta subunit provides nucleotide specificity of the enzyme and binds the substrate succinate, while the binding sites for coenzyme A and phosphate are found in the alpha subunit. The sequence is that of Succinate--CoA ligase [ADP-forming] subunit beta from Brucella anthropi (strain ATCC 49188 / DSM 6882 / CCUG 24695 / JCM 21032 / LMG 3331 / NBRC 15819 / NCTC 12168 / Alc 37) (Ochrobactrum anthropi).